The sequence spans 993 residues: Receptor-type tyrosine-protein kinase FLT3 (993 aa).

A signal peptide spans 1-26 (MPALARDGGQLPLLVVFSAMIFGTIT). The Extracellular portion of the chain corresponds to 27–543 (NQDLPVIKCV…PFPFIQDNIS (517 aa)). C35 and C65 are disulfide-bonded. Residues N43 and N100 are each glycosylated (N-linked (GlcNAc...) asparagine). Cysteines 103 and 114 form a disulfide. N151 carries an N-linked (GlcNAc...) asparagine glycan. Cystine bridges form between C199–C206, C232–C241, and C272–C330. One can recognise an Ig-like C2-type domain in the interval 253–343 (PQTTLPQLFL…KHPSQSALVT (91 aa)). Residues N306, N323, N351, and N354 are each glycosylated (N-linked (GlcNAc...) asparagine). Disulfide bonds link C368/C407 and C381/C392. N-linked (GlcNAc...) asparagine glycans are attached at residues N473, N502, and N541. The helical transmembrane segment at 544 to 563 (FYATIGVCLLFIVVLTLLIC) threads the bilayer. Over 564–993 (HKYKKQFRYE…LSPQAQVEDS (430 aa)) the chain is Cytoplasmic. Y572 is subject to Phosphotyrosine. At S574 the chain carries Phosphoserine. Phosphotyrosine; by autocatalysis is present on residues Y589, Y591, and Y599. The interval 591–597 (YVDFREY) is important for normal regulation of the kinase activity and for maintaining the kinase in an inactive state in the absence of bound ligand. Residues 610–943 (LEFGKVLGSG…PSFPNLTSFL (334 aa)) enclose the Protein kinase domain. Residues 616–624 (LGSGAFGKV) and K644 each bind ATP. Phosphotyrosine; by autocatalysis is present on Y726. S759 bears the Phosphoserine mark. Residues Y768 and Y793 each carry the phosphotyrosine modification. Residue D811 is the Proton acceptor of the active site. Phosphotyrosine; by autocatalysis occurs at positions 842, 955, and 969. S993 carries the phosphoserine modification.

The protein belongs to the protein kinase superfamily. Tyr protein kinase family. CSF-1/PDGF receptor subfamily. In terms of assembly, monomer in the absence of bound FLT3LG. Homodimer in the presence of bound FLT3LG. Interacts with FIZ1 following ligand activation. Interacts with FES, FER, LYN, FGR, HCK, SRC and GRB2. Interacts with PTPRJ/DEP-1 and PTPN11/SHP2. Interacts with RNF115 and RNF126. (Microbial infection) Interacts with human cytomegalovirus protein UL7. Post-translationally, N-glycosylated, contains complex N-glycans with sialic acid. In terms of processing, autophosphorylated on several tyrosine residues in response to FLT3LG binding. FLT3LG binding also increases phosphorylation of mutant kinases that are constitutively activated. Dephosphorylated by PTPRJ/DEP-1, PTPN1, PTPN6/SHP-1, and to a lesser degree by PTPN12. Dephosphorylation is important for export from the endoplasmic reticulum and location at the cell membrane. Rapidly ubiquitinated by UBE2L6 and the E3 ubiquitin-protein ligase SIAH1 after autophosphorylation, leading to its proteasomal degradation. As to expression, detected in bone marrow, in hematopoietic stem cells, in myeloid progenitor cells and in granulocyte/macrophage progenitor cells (at protein level). Detected in bone marrow, liver, thymus, spleen and lymph node, and at low levels in kidney and pancreas. Highly expressed in T-cell leukemia.

Its subcellular location is the membrane. The protein localises to the endoplasmic reticulum lumen. The catalysed reaction is L-tyrosyl-[protein] + ATP = O-phospho-L-tyrosyl-[protein] + ADP + H(+). With respect to regulation, present in an inactive conformation in the absence of bound ligand. FLT3LG binding leads to dimerization and activation by autophosphorylation. Tyrosine-protein kinase that acts as a cell-surface receptor for the cytokine FLT3LG and regulates differentiation, proliferation and survival of hematopoietic progenitor cells and of dendritic cells. Promotes phosphorylation of SHC1 and AKT1, and activation of the downstream effector MTOR. Promotes activation of RAS signaling and phosphorylation of downstream kinases, including MAPK1/ERK2 and/or MAPK3/ERK1. Promotes phosphorylation of FES, FER, PTPN6/SHP, PTPN11/SHP-2, PLCG1, and STAT5A and/or STAT5B. Activation of wild-type FLT3 causes only marginal activation of STAT5A or STAT5B. Mutations that cause constitutive kinase activity promote cell proliferation and resistance to apoptosis via the activation of multiple signaling pathways. This is Receptor-type tyrosine-protein kinase FLT3 (FLT3) from Homo sapiens (Human).